We begin with the raw amino-acid sequence, 538 residues long: Zinc finger protein with KRAB and SCAN domains 3 (538 aa).

A Phosphoserine modification is found at Ser-42. An SCAN box domain is found at 46–128 (RERFRGFRYP…VLLEYLERQL (83 aa)). A Glycyl lysine isopeptide (Lys-Gly) (interchain with G-Cter in SUMO2) cross-link involves residue Lys-171. Thr-207 bears the Phosphothreonine mark. Residues 214–274 (LKVEDVALTL…PAEELPEKEH (61 aa)) enclose the KRAB domain. Over residues 226–236 (EWTQQDSSQGN) the composition is skewed to polar residues. Positions 226 to 274 (EWTQQDSSQGNLCRDEKQENHGSLVSLGDEKQTKSRDLPPAEELPEKEH) are disordered. The segment covering 253 to 274 (GDEKQTKSRDLPPAEELPEKEH) has biased composition (basic and acidic residues). C2H2-type zinc fingers lie at residues 314 to 336 (HICH…RRIH), 342 to 364 (YECE…QRVH), 370 to 392 (YECE…QRTH), 398 to 420 (YECD…HRIH), and 426 to 448 (YQCS…QRIH). Thr-449 is subject to Phosphothreonine. 2 consecutive C2H2-type zinc fingers follow at residues 480–502 (YKCN…QKIH) and 508–530 (YQCN…QRSH).

Belongs to the krueppel C2H2-type zinc-finger protein family.

The protein resides in the nucleus. It localises to the cytoplasm. Transcriptional factor that binds to the consensus sequence 5'-[GT][AG][AGT]GGGG-3' and acts as a repressor of autophagy. Specifically represses expression of genes involved in autophagy and lysosome biogenesis/function such as MAP1LC3B, ULK1 or WIPI2. Associates with chromatin at the ITGB4 and VEGF promoters. Also acts as a transcription activator and promotes cancer cell progression and/or migration in various tumors and myelomas. This Homo sapiens (Human) protein is Zinc finger protein with KRAB and SCAN domains 3 (ZKSCAN3).